Consider the following 91-residue polypeptide: Acylphosphatase (91 aa).

One can recognise an Acylphosphatase-like domain in the interval 5–91 (CSKFIVSGHV…EHDYQGFEIL (87 aa)). Active-site residues include R20 and N38.

This sequence belongs to the acylphosphatase family.

It carries out the reaction an acyl phosphate + H2O = a carboxylate + phosphate + H(+). The polypeptide is Acylphosphatase (acyP) (Vibrio cholerae serotype O1 (strain ATCC 39315 / El Tor Inaba N16961)).